The sequence spans 126 residues: Adenosine 5'-monophosphoramidase HINT1 (126 aa).

N-acetylalanine is present on Ala-2. Residues 18–126 (IFGKIIRKEI…GGRQMNWPPG (109 aa)) enclose the HIT domain. An N6-acetyllysine mark is found at Lys-21 and Lys-30. Residue 43–44 (DI) participates in AMP binding. Ser-45 and Ser-72 each carry phosphoserine. AMP-binding positions include Asn-99, 105–107 (GQS), and 112–114 (HLH). The Histidine triad motif motif lies at 110 to 114 (HIHLH). His-112 functions as the Tele-AMP-histidine intermediate in the catalytic mechanism.

The protein belongs to the HINT family. Homodimer. Interacts with CDK7. Interacts with RUVBL1 and RUVBL2 and is associated with the LEF1/TCF1-CTNNB1 complex and with a KAT5 histone acetyltransferase complex. Identified in a complex with MITF and CTNNB1. Interacts with CDC34 and RBX1, and is part of a SCF (SKP2-CUL1-F-box protein) E3 ubiquitin-protein ligase complex. Interacts with SUMO1, SUMO2 and RGS17. Interacts with the Ten-1 ICD form of TENM1. Interacts with CALM1; interaction increases in the presence of calcium ions.

Its subcellular location is the cytoplasm. It is found in the nucleus. It carries out the reaction adenosine 5'-phosphoramidate + H2O = AMP + NH4(+). Its function is as follows. Exhibits adenosine 5'-monophosphoramidase activity, hydrolyzing purine nucleotide phosphoramidates with a single phosphate group such as adenosine 5'monophosphoramidate (AMP-NH2) to yield AMP and NH2. Hydrolyzes adenosine 5'monophosphomorpholidate (AMP-morpholidate) and guanosine 5'monophosphomorpholidate (GMP-morpholidate). Hydrolyzes lysyl-AMP (AMP-N-epsilon-(N-alpha-acetyl lysine methyl ester)) generated by lysine tRNA ligase, as well as Met-AMP, His-AMP and Asp-AMP, lysyl-GMP (GMP-N-epsilon-(N-alpha-acetyl lysine methyl ester)) and AMP-N-alanine methyl ester. Can also convert adenosine 5'-O-phosphorothioate and guanosine 5'-O-phosphorothioate to the corresponding nucleoside 5'-O-phosphates with concomitant release of hydrogen sulfide. In addition, functions as a scaffolding protein that modulates transcriptional activation by the LEF1/TCF1-CTNNB1 complex and by the complex formed with MITF and CTNNB1. Modulates p53/TP53 levels and p53/TP53-mediated apoptosis. Modulates proteasomal degradation of target proteins by the SCF (SKP2-CUL1-F-box protein) E3 ubiquitin-protein ligase complex. Also exhibits SUMO-specific isopeptidase activity, deconjugating SUMO1 from RANGAP1 and RGS17. The polypeptide is Adenosine 5'-monophosphoramidase HINT1 (Hint1) (Rattus norvegicus (Rat)).